The primary structure comprises 176 residues: Disulfide bond formation protein B (176 aa).

Over 1-14 (MLRFLNQCSRGRGA) the chain is Cytoplasmic. Residues 15–31 (WLLMAFTALALEMVALW) form a helical membrane-spanning segment. The Periplasmic segment spans residues 32–49 (FQHVMLLKPCVLCIYERC). A disulfide bond links cysteine 41 and cysteine 44. A helical transmembrane segment spans residues 50-65 (ALFGVMGAGLVGAIAP). The Cytoplasmic segment spans residues 66–71 (KTPLRY). A helical membrane pass occupies residues 72 to 89 (VAMVIWIYSAWRGLQLAY). Topologically, residues 90-144 (EHTMIQLHPSPFMTCDFMARFPDWLPLGKWLPQVFVASGDCAERQWSFLTLEMPQ) are periplasmic. An intrachain disulfide couples cysteine 104 to cysteine 130. Residues 145–163 (WLLGIFAAYLVVAIAVVIA) traverse the membrane as a helical segment. Residues 164 to 176 (QAFKPKKRDLFGR) are Cytoplasmic-facing.

It belongs to the DsbB family.

It localises to the cell inner membrane. Required for disulfide bond formation in some periplasmic proteins. Acts by oxidizing the DsbA protein. The polypeptide is Disulfide bond formation protein B (Salmonella paratyphi A (strain ATCC 9150 / SARB42)).